The primary structure comprises 76 residues: Putative defensin-like protein 121 (76 aa).

Residues 1-26 (MTYKATILAIFMIILVLGIGTKETRG) form the signal peptide. Intrachain disulfides connect Cys-30/Cys-74, Cys-39/Cys-59, Cys-44/Cys-68, and Cys-48/Cys-70.

This sequence belongs to the DEFL family.

The protein resides in the secreted. The protein is Putative defensin-like protein 121 (LCR55) of Arabidopsis thaliana (Mouse-ear cress).